Consider the following 70-residue polypeptide: ATP synthase subunit c (70 aa).

The next 2 helical transmembrane spans lie at I4–I24 and F47–V67.

It belongs to the ATPase C chain family. As to quaternary structure, F-type ATPases have 2 components, F(1) - the catalytic core - and F(0) - the membrane proton channel. F(1) has five subunits: alpha(3), beta(3), gamma(1), delta(1), epsilon(1). F(0) has three main subunits: a(1), b(2) and c(10-14). The alpha and beta chains form an alternating ring which encloses part of the gamma chain. F(1) is attached to F(0) by a central stalk formed by the gamma and epsilon chains, while a peripheral stalk is formed by the delta and b chains.

The protein localises to the cell membrane. In terms of biological role, f(1)F(0) ATP synthase produces ATP from ADP in the presence of a proton or sodium gradient. F-type ATPases consist of two structural domains, F(1) containing the extramembraneous catalytic core and F(0) containing the membrane proton channel, linked together by a central stalk and a peripheral stalk. During catalysis, ATP synthesis in the catalytic domain of F(1) is coupled via a rotary mechanism of the central stalk subunits to proton translocation. Its function is as follows. Key component of the F(0) channel; it plays a direct role in translocation across the membrane. A homomeric c-ring of between 10-14 subunits forms the central stalk rotor element with the F(1) delta and epsilon subunits. The sequence is that of ATP synthase subunit c from Priestia megaterium (strain ATCC 12872 / QMB1551) (Bacillus megaterium).